Here is a 208-residue protein sequence, read N- to C-terminus: Heavy metal-associated isoprenylated plant protein 42 (208 aa).

An HMA domain is found at 6 to 70 (FPICILKMNL…AVAKLGQSPQ (65 aa)). Positions 93–116 (ATNKTQDKPSPPAPPVTATTPVET) are disordered. The residue at position 205 (cysteine 205) is a Cysteine methyl ester. The S-farnesyl cysteine moiety is linked to residue cysteine 205. A propeptide spans 206–208 (SIM) (removed in mature form).

It belongs to the HIPP family.

In terms of biological role, probable heavy-metal-binding protein. The polypeptide is Heavy metal-associated isoprenylated plant protein 42 (Arabidopsis thaliana (Mouse-ear cress)).